Here is a 338-residue protein sequence, read N- to C-terminus: tRNA N6-adenosine threonylcarbamoyltransferase (338 aa).

Fe cation is bound by residues histidine 111 and histidine 115. Substrate-binding positions include 134-138, aspartate 167, glycine 180, and asparagine 272; that span reads LVSGG. Aspartate 300 is a Fe cation binding site.

This sequence belongs to the KAE1 / TsaD family. The cofactor is Fe(2+).

Its subcellular location is the cytoplasm. The catalysed reaction is L-threonylcarbamoyladenylate + adenosine(37) in tRNA = N(6)-L-threonylcarbamoyladenosine(37) in tRNA + AMP + H(+). Functionally, required for the formation of a threonylcarbamoyl group on adenosine at position 37 (t(6)A37) in tRNAs that read codons beginning with adenine. Is involved in the transfer of the threonylcarbamoyl moiety of threonylcarbamoyl-AMP (TC-AMP) to the N6 group of A37, together with TsaE and TsaB. TsaD likely plays a direct catalytic role in this reaction. The sequence is that of tRNA N6-adenosine threonylcarbamoyltransferase from Vibrio parahaemolyticus serotype O3:K6 (strain RIMD 2210633).